A 381-amino-acid polypeptide reads, in one-letter code: MTQTALNIGTTLNKTKNDVELRKVFKVFEGHTAVKGVDFNIRQGEFFSILGPSGCGKTTTLRLIAGFETPSAGEIIIRGQSMSQTPAYRRPVNTVFQSYALFNHLSVKDNIAFGLRIKRLGKTETEEKVAQALQLVKMEKFADRYPNQISGGQQQRVALARALVNRPAVLLLDEPLGALDLKLRKQMQMELSNIHKDLGVTFVMVTHDQQEAMSMSDRIAVMHEGRIEQIGSPQEIYECPESPFVADFIGDTNLFQGCVEYNNNSSLVVKTDSGLNISAEYKKVNGKNGEIYGGTSVVLSVRPEKVNLSLYPPDVSENCFEGRLRNVMYMGTHVHYQVNLLSGDQMMVRQPNTERTLPNLDTPMYVYWSKQNCLALSESKS.

The ABC transporter domain maps to 19–249; it reads VELRKVFKVF…PESPFVADFI (231 aa). 51 to 58 is an ATP binding site; it reads GPSGCGKT.

This sequence belongs to the ABC transporter superfamily. Spermidine/putrescine importer (TC 3.A.1.11.1) family. As to quaternary structure, the complex is composed of two ATP-binding proteins (PotA), two transmembrane proteins (PotB and PotC) and a solute-binding protein (PotD).

It localises to the cell inner membrane. It carries out the reaction ATP + H2O + polyamine-[polyamine-binding protein]Side 1 = ADP + phosphate + polyamineSide 2 + [polyamine-binding protein]Side 1.. Functionally, part of the ABC transporter complex PotABCD involved in spermidine/putrescine import. Responsible for energy coupling to the transport system. The protein is Spermidine/putrescine import ATP-binding protein PotA of Trichodesmium erythraeum (strain IMS101).